The sequence spans 296 residues: Probable lipid kinase YegS-like (296 aa).

The DAGKc domain occupies 1-130; it reads MPHTLLILNG…IDLAQVNDKH (130 aa). ATP-binding positions include Thr-37, 63 to 69, and Thr-92; that span reads GDGTINE. 3 residues coordinate Mg(2+): Leu-212, Asp-215, and Leu-217. Glu-268 acts as the Proton acceptor in catalysis.

It belongs to the diacylglycerol/lipid kinase family. YegS lipid kinase subfamily. Mg(2+) serves as cofactor. The cofactor is Ca(2+).

It localises to the cytoplasm. Functionally, probably phosphorylates lipids; the in vivo substrate is unknown. This is Probable lipid kinase YegS-like from Yersinia enterocolitica serotype O:8 / biotype 1B (strain NCTC 13174 / 8081).